A 168-amino-acid chain; its full sequence is Protein-export protein SecB (168 aa).

The protein belongs to the SecB family. Homotetramer, a dimer of dimers. One homotetramer interacts with 1 SecA dimer.

It localises to the cytoplasm. In terms of biological role, one of the proteins required for the normal export of preproteins out of the cell cytoplasm. It is a molecular chaperone that binds to a subset of precursor proteins, maintaining them in a translocation-competent state. It also specifically binds to its receptor SecA. The sequence is that of Protein-export protein SecB from Thioalkalivibrio sulfidiphilus (strain HL-EbGR7).